Consider the following 312-residue polypeptide: Glycine--tRNA ligase alpha subunit (312 aa).

It belongs to the class-II aminoacyl-tRNA synthetase family. As to quaternary structure, tetramer of two alpha and two beta subunits.

Its subcellular location is the cytoplasm. It catalyses the reaction tRNA(Gly) + glycine + ATP = glycyl-tRNA(Gly) + AMP + diphosphate. In Buchnera aphidicola subsp. Acyrthosiphon pisum (strain APS) (Acyrthosiphon pisum symbiotic bacterium), this protein is Glycine--tRNA ligase alpha subunit (glyQ).